The primary structure comprises 348 residues: Protein RecA (348 aa).

68–75 (GPESSGKT) contacts ATP.

This sequence belongs to the RecA family.

It localises to the cytoplasm. Can catalyze the hydrolysis of ATP in the presence of single-stranded DNA, the ATP-dependent uptake of single-stranded DNA by duplex DNA, and the ATP-dependent hybridization of homologous single-stranded DNAs. It interacts with LexA causing its activation and leading to its autocatalytic cleavage. The polypeptide is Protein RecA (Rhodococcus opacus (strain B4)).